The following is a 570-amino-acid chain: MSEKHPGPLVVEGKLTDAERMKLESNYLRGTIAEDLNDGLTGGFKGDNVLLIRFHGMYQQDDRDIRAERAEQKLEPRHAMLLRCRLPGGVITTKQWQAIDKFAGENTIYGSIRLTNRQTFQFHGILKKNVKPVHQMLHSVGLDALATANDMNRNVLCTSNPYESQLHAEAYEWAKKISEHLLPRTRAYAEIWLDQEKVATTDEEPILGQTYLPRKFKTTVVIPPQNDIDLHANDMNFVAIAENGKLVGFNLLVGGGLSIEHGNKKTYARAASEFGYLPLEHTLAVAEAVVTTQRDWGNRTDRKNAKTKYTLERVGVETFKAEVERRAGIKFEPIRPYEFTGRGDRIGWVKGIDDNWHLTLFIENGRILDYPGRPLKTGLLEIAKIHKGDFRITANQNLIIAGVPESEKAKIEKIAKESGLMNAVTPQRENSMACVSFPTCPLAMAEAERFLPSFIDNIDNLMAKHGVSDEHIVMRVTGCPNGCGRAMLAEVGLVGKAPGRYNLHLGGNRIGTRIPRMYKENITEPEILASLDELIERWAKEREAGEGFGDFTVRAGIIRPVLDPARDLWD.

Positions 434, 440, 479, and 483 each coordinate [4Fe-4S] cluster. Residue Cys483 participates in siroheme binding.

Belongs to the nitrite and sulfite reductase 4Fe-4S domain family. As to quaternary structure, alpha(8)-beta(8). The alpha component is a flavoprotein, the beta component is a hemoprotein. Requires siroheme as cofactor. [4Fe-4S] cluster serves as cofactor.

The enzyme catalyses hydrogen sulfide + 3 NADP(+) + 3 H2O = sulfite + 3 NADPH + 4 H(+). It participates in sulfur metabolism; hydrogen sulfide biosynthesis; hydrogen sulfide from sulfite (NADPH route): step 1/1. Component of the sulfite reductase complex that catalyzes the 6-electron reduction of sulfite to sulfide. This is one of several activities required for the biosynthesis of L-cysteine from sulfate. This is Sulfite reductase [NADPH] hemoprotein beta-component from Shigella dysenteriae serotype 1 (strain Sd197).